We begin with the raw amino-acid sequence, 273 residues long: Ribosomal RNA small subunit methyltransferase I (273 aa).

This sequence belongs to the methyltransferase superfamily. RsmI family.

It localises to the cytoplasm. The enzyme catalyses cytidine(1402) in 16S rRNA + S-adenosyl-L-methionine = 2'-O-methylcytidine(1402) in 16S rRNA + S-adenosyl-L-homocysteine + H(+). Its function is as follows. Catalyzes the 2'-O-methylation of the ribose of cytidine 1402 (C1402) in 16S rRNA. This Xylella fastidiosa (strain Temecula1 / ATCC 700964) protein is Ribosomal RNA small subunit methyltransferase I.